A 196-amino-acid polypeptide reads, in one-letter code: Peptidyl-tRNA hydrolase (196 aa).

Tyrosine 21 lines the tRNA pocket. Histidine 26 (proton acceptor) is an active-site residue. Positions 72, 74, and 120 each coordinate tRNA.

Belongs to the PTH family. In terms of assembly, monomer.

Its subcellular location is the cytoplasm. The catalysed reaction is an N-acyl-L-alpha-aminoacyl-tRNA + H2O = an N-acyl-L-amino acid + a tRNA + H(+). Its function is as follows. Hydrolyzes ribosome-free peptidyl-tRNAs (with 1 or more amino acids incorporated), which drop off the ribosome during protein synthesis, or as a result of ribosome stalling. Functionally, catalyzes the release of premature peptidyl moieties from peptidyl-tRNA molecules trapped in stalled 50S ribosomal subunits, and thus maintains levels of free tRNAs and 50S ribosomes. This chain is Peptidyl-tRNA hydrolase, found in Mycobacteroides abscessus (strain ATCC 19977 / DSM 44196 / CCUG 20993 / CIP 104536 / JCM 13569 / NCTC 13031 / TMC 1543 / L948) (Mycobacterium abscessus).